The chain runs to 536 residues: Mannuronan C5-epimerase (536 aa).

Residues M1 to A36 form the signal peptide. 5 PbH1 repeats span residues T298–D320, S322–R345, V347–R369, S371–E393, and S394–N416. H319 functions as the Proton acceptor in the catalytic mechanism.

Belongs to the D-mannuronate C5-epimerase family.

The protein resides in the periplasm. It carries out the reaction [(1-&gt;4)-beta-D-mannuronosyl](n) = [alginate](n). It functions in the pathway glycan biosynthesis; alginate biosynthesis. Its function is as follows. Catalyzes the epimerization of beta-D-mannuronate to alpha-L-guluronate during the synthesis of the linear polysaccharide alginate. In addition, is part of a periplasmic protein complex that protects alginate from degradation by AlgL by channeling the newly formed alginate polymer through a scaffold that transfers the alginate polymer through the periplasmic space to the outer membrane secretin AlgE. In Pseudomonas syringae pv. tomato (strain ATCC BAA-871 / DC3000), this protein is Mannuronan C5-epimerase (algG).